The sequence spans 122 residues: Fluoride-specific ion channel FluC 2 (122 aa).

4 helical membrane-spanning segments follow: residues 3 to 23 (ITAI…RMFI), 38 to 58 (TSIV…LNLT), 62 to 82 (LLLL…SFIY), and 93 to 113 (FMHL…CFYL). Residues glycine 72 and serine 75 each contribute to the Na(+) site.

Belongs to the fluoride channel Fluc/FEX (TC 1.A.43) family.

The protein resides in the cell inner membrane. It carries out the reaction fluoride(in) = fluoride(out). Na(+) is not transported, but it plays an essential structural role and its presence is essential for fluoride channel function. Its function is as follows. Fluoride-specific ion channel. Important for reducing fluoride concentration in the cell, thus reducing its toxicity. This Prochlorococcus marinus (strain MIT 9312) protein is Fluoride-specific ion channel FluC 2.